Consider the following 450-residue polypeptide: Keratin, type I cytoskeletal 25 (450 aa).

The interval 1–24 (MSLRLPSGSRRAGPRPTTGSLRLS) is disordered. The tract at residues 1-78 (MSLRLPSGSR…MNEGGLLSGN (78 aa)) is head. The interval 79 to 114 (EKVTMQNLNDRLASYLENVRALEEANADLEQKIKGW) is coil 1A. In terms of domain architecture, IF rod spans 79 to 394 (EKVTMQNLND…LLIGGDDGAC (316 aa)). The segment at 115–136 (YEKFGPGSCRGLDHDYSRYLPI) is linker 1. A coil 1B region spans residues 137–228 (IEDLKNQIIA…KNHKEEMQVL (92 aa)). The linker 12 stretch occupies residues 229–251 (QCAAGGNVNVEMNAAPGVDLTVL). The coil 2 stretch occupies residues 252 to 390 (LNNMRAEYEA…ETYCLLIGGD (139 aa)). The segment at 391 to 450 (DGACKSGGYKSKDYAAGNMGNQMKDPIRAIVVKKVLEEVDQRSKVLTTRLHSLEEKSQSN) is tail. Position 442 is a phosphoserine (Ser442).

The protein belongs to the intermediate filament family. Heterodimer of a type I and a type II keratin. Heterodimer with type II keratin KRT5 leading to the formation of keratin intermediate filament (KIF) network. Interacts with KRT6A to form filaments. Expressed in skin and wool follicle. Expression localized to the inner root sheath of wool follicle.

Its subcellular location is the cytoplasm. Functionally, essential for the proper assembly of type I and type II keratin protein complexes and formation of keratin intermediate filaments in the inner root sheath (irs). Plays a role in the cytoskeleton organization. In Ovis aries (Sheep), this protein is Keratin, type I cytoskeletal 25.